A 119-amino-acid polypeptide reads, in one-letter code: Methylglyoxal synthase (119 aa).

The region spanning 1 to 119 (MKIALIAHDK…ESAKLIMADI (119 aa)) is the MGS-like domain. Substrate-binding positions include histidine 8, lysine 12, 34–37 (TGTT), and 54–55 (SG). The active-site Proton donor/acceptor is the aspartate 60. Substrate is bound at residue histidine 87.

This sequence belongs to the methylglyoxal synthase family.

It carries out the reaction dihydroxyacetone phosphate = methylglyoxal + phosphate. Catalyzes the formation of methylglyoxal from dihydroxyacetone phosphate. This Clostridium perfringens (strain ATCC 13124 / DSM 756 / JCM 1290 / NCIMB 6125 / NCTC 8237 / Type A) protein is Methylglyoxal synthase.